Reading from the N-terminus, the 496-residue chain is MARYEFFRQIFIVLSIVSPLVRSFTVITSDSTAPSALIDGPQTGFTMTNDGARTEPDEQDAVYDIMRATGNDWAAAIPDVCRGRWHGIECMPDQDNVYHVVSLSFGALSDDTAFPTCDPQRSYVSESLTRLKHLKALFFYRCLGRAPQRIPAFLGRLGSSLQTLVLRENGFLGPIPDELGNLTNLKVLDLHKNHLNGSIPLSFNRFSGLRSLDLSGNRLTGSIPGFVLPALSVLDLNQNLLTGPVPPTLTSCGSLIKIDLSRNRVTGPIPESINRLNQLVLLDLSYNRLSGPFPSSLQGLNSLQALMLKGNTKFSTTIPENAFKGLKNLMILVLSNTNIQGSIPKSLTRLNSLRVLHLEGNNLTGEIPLEFRDVKHLSELRLNDNSLTGPVPFERDTVWRMRRKLRLYNNAGLCVNRDSDLDDAFGSKSGSTVRLCDAETSRPAPSGTVQHLSREEDGALPDGATDVSSTSKSLGFSYLSAFFLVFPNFIFMLISS.

Residues methionine 1–serine 23 form the signal peptide. The Extracellular segment spans residues phenylalanine 24 to serine 473. LRR repeat units follow at residues glycine 158–leucine 182, threonine 183–glycine 208, arginine 210–leucine 228, proline 229–cysteine 252, serine 254–leucine 276, asparagine 277–leucine 300, serine 302–glycine 325, leucine 326–leucine 350, asparagine 351–aspartate 373, and lysine 375–methionine 401. Asparagine 181 and asparagine 196 each carry an N-linked (GlcNAc...) asparagine glycan. N-linked (GlcNAc...) asparagine glycosylation occurs at asparagine 362. The disordered stretch occupies residues alanine 438–alanine 464. The helical transmembrane segment at leucine 474 to isoleucine 494 threads the bilayer. The Cytoplasmic segment spans residues serine 495 to serine 496.

This sequence belongs to the RLP family. Forms heterodimer with ERECTA or ERL1 through their extracellular domains. Not able to form homodimer. Interacts with EPF2 but not with EPF1. Interacts with SERK1, SERK2, SERK3/BAK1 and SERK4. Interacts with EPFL9/STOMAGEN. In terms of tissue distribution, in epidermal cells of developing shoots and leaves, but not in roots. Expressed in the stomatal cell lineage in the developing epidermis. Accumulates strongly in meristemoid mother cells (MMC) and meristemoids, somewhat less in meristemoid sister cells (stomatal-lineage ground cells, SLGC), and is barely detected in pavement cells.

The protein resides in the cell membrane. Promotes cell fate progression in stomatal development. In leaves, needed to correctly orient spacing divisions, to limit the number of asymmetric divisions in neighbor cells, and to promote the asymmetric (amplifying) divisions of meristemoids. In stems, promotes the conversion of meristemoids into guard mother cells (GMC). Positively regulates CAPRICE (CPC) expression in differentiating stomaless-forming cell files. Forms constitutive complexes with ERECTA and ERL1 involved in the recognition of the stomatal regulatory peptides EPF1, EPF2 and EPFL9/STOMAGEN. Modulates the activity of the ligand-receptor pairs EPF2-ERECTA and EPF1-ERL1 in stomatal development. Functions in a combinatorial specific manner with the ERECTA-family (ERf) receptor kinases in the regulation of the immune response. This Arabidopsis thaliana (Mouse-ear cress) protein is Protein TOO MANY MOUTHS.